We begin with the raw amino-acid sequence, 613 residues long: 9-cis-epoxycarotenoid dioxygenase NCED5, chloroplastic (613 aa).

The segment covering 1–15 (MPTTFTPNSPASSCS) has biased composition (polar residues). Residues 1–36 (MPTTFTPNSPASSCSIHHRASPSRGARNSVRFTRPR) constitute a chloroplast transit peptide. The tract at residues 1 to 62 (MPTTFTPNSP…PPAYVPPPPP (62 aa)) is disordered. Low complexity predominate over residues 37–50 (AAAAATNSVLSAPS). Residues 51 to 62 (SVPPAYVPPPPP) are compositionally biased toward pro residues. Fe cation is bound by residues histidine 305, histidine 354, histidine 419, and histidine 600.

Belongs to the carotenoid oxygenase family. It depends on Fe(2+) as a cofactor.

It localises to the plastid. The protein resides in the chloroplast. The enzyme catalyses a 9-cis-epoxycarotenoid + O2 = a 12'-apo-carotenal + 2-cis,4-trans-xanthoxin. It carries out the reaction 9-cis-violaxanthin + O2 = (3S,5R,6S)-5,6-epoxy-3-hydroxy-5,6-dihydro-12'-apo-beta-caroten-12'-al + 2-cis,4-trans-xanthoxin. It catalyses the reaction 9'-cis-neoxanthin + O2 = (3S,5R,6R)-3,5-dihydroxy-6,7-didehydro-5,6-dihydro-12'-apo-beta-caroten-12'-al + 2-cis,4-trans-xanthoxin. Has a 11,12(11',12') 9-cis epoxycarotenoid cleavage activity. Catalyzes the first step of abscisic-acid biosynthesis from carotenoids. In Oryza sativa subsp. japonica (Rice), this protein is 9-cis-epoxycarotenoid dioxygenase NCED5, chloroplastic.